A 69-amino-acid polypeptide reads, in one-letter code: Cold shock-like protein CspC (69 aa).

The CSD domain maps to 6–66 (GQVKWFNESK…GQKGPAAVNV (61 aa)).

Its subcellular location is the cytoplasm. This Escherichia coli O157:H7 protein is Cold shock-like protein CspC (cspC).